Here is a 159-residue protein sequence, read N- to C-terminus: Phosphopantetheine adenylyltransferase (159 aa).

Threonine 10 is a substrate binding site. ATP contacts are provided by residues 10 to 11 (TF) and histidine 18. Substrate is bound by residues lysine 42, methionine 74, and arginine 88. Residues 89-91 (GLR), glutamate 99, and 124-130 (WSFISSS) each bind ATP.

Belongs to the bacterial CoaD family. Homohexamer. It depends on Mg(2+) as a cofactor.

The protein resides in the cytoplasm. It catalyses the reaction (R)-4'-phosphopantetheine + ATP + H(+) = 3'-dephospho-CoA + diphosphate. The protein operates within cofactor biosynthesis; coenzyme A biosynthesis; CoA from (R)-pantothenate: step 4/5. Reversibly transfers an adenylyl group from ATP to 4'-phosphopantetheine, yielding dephospho-CoA (dPCoA) and pyrophosphate. The chain is Phosphopantetheine adenylyltransferase from Klebsiella pneumoniae subsp. pneumoniae (strain ATCC 700721 / MGH 78578).